A 279-amino-acid polypeptide reads, in one-letter code: Energy-coupling factor transporter ATP-binding protein EcfA (279 aa).

Positions 4–239 constitute an ABC transporter domain; that stretch reads VETKDLYFRY…VETIRKANLR (236 aa). 37 to 44 lines the ATP pocket; that stretch reads GPNGAGKS.

This sequence belongs to the ABC transporter superfamily. Energy-coupling factor EcfA family. In terms of assembly, forms a stable energy-coupling factor (ECF) transporter complex composed of 2 membrane-embedded substrate-binding proteins (S component), 2 ATP-binding proteins (A component) and 2 transmembrane proteins (T component).

It localises to the cell membrane. Its function is as follows. ATP-binding (A) component of a common energy-coupling factor (ECF) ABC-transporter complex. Unlike classic ABC transporters this ECF transporter provides the energy necessary to transport a number of different substrates. The protein is Energy-coupling factor transporter ATP-binding protein EcfA of Methanocaldococcus jannaschii (strain ATCC 43067 / DSM 2661 / JAL-1 / JCM 10045 / NBRC 100440) (Methanococcus jannaschii).